We begin with the raw amino-acid sequence, 172 residues long: MKLSKFLIKLAMCYILIWFRHFLLSSIRIIGTTWTFWTAWFFGAFRNIWCIRIIGNRWLFRSFWSTGTLRSIFNTRILWFFRSLRFLFNYFNWWFWFILDLLKYFEPTFTLFLFGALDLKKKFNFIACKLPVLFFSNGKEFIFTHHFLNKARQQLISSKRPFVALLINELHK.

This is an uncharacterized protein from Mycoplasma pneumoniae (strain ATCC 29342 / M129 / Subtype 1) (Mycoplasmoides pneumoniae).